A 740-amino-acid polypeptide reads, in one-letter code: Elongation factor 2 (740 aa).

A tr-type G domain is found at 23–264; the sequence is AQIRNAGTLA…MIIEHVPPPN (242 aa). Residues 32–39, 98–102, and 152–155 each bind GTP; these read AHVDHGKT, DTPGH, and NKID. His605 carries the diphthamide modification.

It belongs to the TRAFAC class translation factor GTPase superfamily. Classic translation factor GTPase family. EF-G/EF-2 subfamily.

It is found in the cytoplasm. In terms of biological role, catalyzes the GTP-dependent ribosomal translocation step during translation elongation. During this step, the ribosome changes from the pre-translocational (PRE) to the post-translocational (POST) state as the newly formed A-site-bound peptidyl-tRNA and P-site-bound deacylated tRNA move to the P and E sites, respectively. Catalyzes the coordinated movement of the two tRNA molecules, the mRNA and conformational changes in the ribosome. In Pyrobaculum calidifontis (strain DSM 21063 / JCM 11548 / VA1), this protein is Elongation factor 2.